A 314-amino-acid polypeptide reads, in one-letter code: Acetaldehyde dehydrogenase 2 (314 aa).

An NAD(+)-binding site is contributed by serine 15–isoleucine 18. The Acyl-thioester intermediate role is filled by cysteine 133. NAD(+)-binding positions include serine 164–asparagine 172 and asparagine 289.

It belongs to the acetaldehyde dehydrogenase family.

It carries out the reaction acetaldehyde + NAD(+) + CoA = acetyl-CoA + NADH + H(+). This Nocardioides sp. (strain ATCC BAA-499 / JS614) protein is Acetaldehyde dehydrogenase 2.